The following is a 305-amino-acid chain: Lipoyl synthase (305 aa).

Positions 41, 46, 52, 68, 72, 75, and 281 each coordinate [4Fe-4S] cluster. Positions 54 to 270 (GARRTATFMI…RKVAMDKGFK (217 aa)) constitute a Radical SAM core domain. Residues 283 to 298 (HADEQVNEAAKEKQRQ) are compositionally biased toward basic and acidic residues. Residues 283–305 (HADEQVNEAAKEKQRQGEAQLNS) form a disordered region.

Belongs to the radical SAM superfamily. Lipoyl synthase family. [4Fe-4S] cluster is required as a cofactor.

The protein localises to the cytoplasm. It catalyses the reaction [[Fe-S] cluster scaffold protein carrying a second [4Fe-4S](2+) cluster] + N(6)-octanoyl-L-lysyl-[protein] + 2 oxidized [2Fe-2S]-[ferredoxin] + 2 S-adenosyl-L-methionine + 4 H(+) = [[Fe-S] cluster scaffold protein] + N(6)-[(R)-dihydrolipoyl]-L-lysyl-[protein] + 4 Fe(3+) + 2 hydrogen sulfide + 2 5'-deoxyadenosine + 2 L-methionine + 2 reduced [2Fe-2S]-[ferredoxin]. It functions in the pathway protein modification; protein lipoylation via endogenous pathway; protein N(6)-(lipoyl)lysine from octanoyl-[acyl-carrier-protein]. In terms of biological role, catalyzes the radical-mediated insertion of two sulfur atoms into the C-6 and C-8 positions of the octanoyl moiety bound to the lipoyl domains of lipoate-dependent enzymes, thereby converting the octanoylated domains into lipoylated derivatives. This chain is Lipoyl synthase, found in Staphylococcus aureus (strain bovine RF122 / ET3-1).